The chain runs to 361 residues: tRNA/tmRNA (uracil-C(5))-methyltransferase (361 aa).

Residues glutamine 185, tyrosine 213, asparagine 218, glutamate 234, and aspartate 294 each contribute to the S-adenosyl-L-methionine site. Cysteine 319 functions as the Nucleophile in the catalytic mechanism. Glutamate 353 (proton acceptor) is an active-site residue.

The protein belongs to the class I-like SAM-binding methyltransferase superfamily. RNA M5U methyltransferase family. TrmA subfamily.

The catalysed reaction is uridine(54) in tRNA + S-adenosyl-L-methionine = 5-methyluridine(54) in tRNA + S-adenosyl-L-homocysteine + H(+). The enzyme catalyses uridine(341) in tmRNA + S-adenosyl-L-methionine = 5-methyluridine(341) in tmRNA + S-adenosyl-L-homocysteine + H(+). Its function is as follows. Dual-specificity methyltransferase that catalyzes the formation of 5-methyluridine at position 54 (m5U54) in all tRNAs, and that of position 341 (m5U341) in tmRNA (transfer-mRNA). This Pseudomonas savastanoi pv. phaseolicola (strain 1448A / Race 6) (Pseudomonas syringae pv. phaseolicola (strain 1448A / Race 6)) protein is tRNA/tmRNA (uracil-C(5))-methyltransferase.